A 153-amino-acid polypeptide reads, in one-letter code: MTRKKRRLYFVVLGMLALFAAAGLTLTAFQDNLVFFYSPTDLQEKGVDQGRRFRVGGLVEEGSVVRDGETVRFIVTDLMNTVTVRYTGMLPDLFREGQGVVAEGAMDGAGTFVAASVLAKHDENYMPPEVAESLKASGKWQHGPPTAAAAPAP.

The Cytoplasmic portion of the chain corresponds to 1-7 (MTRKKRR). A helical; Signal-anchor for type II membrane protein transmembrane segment spans residues 8 to 28 (LYFVVLGMLALFAAAGLTLTA). Over 29 to 153 (FQDNLVFFYS…PPTAAAAPAP (125 aa)) the chain is Periplasmic. Residues His121 and Tyr125 each contribute to the heme site. The tract at residues 132–153 (ESLKASGKWQHGPPTAAAAPAP) is disordered. A compositionally biased stretch (low complexity) spans 144-153 (PPTAAAAPAP).

Belongs to the CcmE/CycJ family.

Its subcellular location is the cell inner membrane. Heme chaperone required for the biogenesis of c-type cytochromes. Transiently binds heme delivered by CcmC and transfers the heme to apo-cytochromes in a process facilitated by CcmF and CcmH. This chain is Cytochrome c-type biogenesis protein CcmE, found in Rhodospirillum rubrum (strain ATCC 11170 / ATH 1.1.1 / DSM 467 / LMG 4362 / NCIMB 8255 / S1).